Reading from the N-terminus, the 748-residue chain is MPVSHSNGCVCGVSLYSAWAAGPDRARVLLALLCRMDDGGCDAKFALVNVCARGVTALARGARDVTAARLEDLARAAAAPRALPLATLGHAATWKALYVSALAACARRLGPFAFIERRALEETTDTGLLVSAEEPPDAADAAPRAAVLRSALRLAVEEDAVRAAAAAAPAGGGSLARARLCAMRDGHADLSAPGNVVEFELTTKTARFYRIFADIAQPPRKRAGRLADVFAHREYRVRTEGSAAPVVVRALVPVNFDCVVADARAFSPMAAMLVFAQWHAALFTDGPAQVLGFLGPQLNPGGEERDYCFLLGFPGVPLVVSAADAGAVRDDLDAHVLTDGLWPAFGVHVYHALGPWNFLDGAAVASLNRRIAAARAALPPGGSDGSDWPAGRVSTILNSPARARGSGWPRFDFSAFFPTLYAHLVPENARLARAICARRDGRPGLKPSLLTFFGGLRHVHAPAYEAVIALANAVAAAVERAANARNFAVCTYVKDGFWGAFGDAAPEVVPREAALAAALALRDDCQRAAEAVLRAAGLHPAEGAELHLRFEGLFTHAVSWSANKYWLWDATAGGAEGELFVGFPCRTEFGRMAKRSLAGLLRRAVAQPERPSDTVAAAAAACDALVHAAFERRGDVRFWSATAPIADWGAVPRSALSGGDLLDADHGPRPYVLVAGHEAAPFPLPWGSLPLPVLLPDIACRAHMAPVLQELARMLNGALAALAAREGDDEPPIEEFEYNLADFDFLFA.

This sequence belongs to the herpesviridae HEPA family. In terms of assembly, associates with the primase and the helicase to form the helicase-primase complex. Interacts with the origin-binding protein. Interacts with the polymerase catalytic subunit.

The protein resides in the host nucleus. Component of the helicase/primase complex. Unwinds the DNA at the replication forks and generates single-stranded DNA for both leading and lagging strand synthesis. The primase synthesizes short RNA primers on the lagging strand that the polymerase presumably elongates using dNTPs. The primase-associated factor has no known catalytic activity in the complex and may serve to facilitate the formation of the replisome by directly interacting with the origin-binding protein and the polymerase. In Bos taurus (Bovine), this protein is DNA helicase/primase complex-associated protein (UL8).